Here is a 426-residue protein sequence, read N- to C-terminus: Cytochrome c biogenesis protein CcsB (426 aa).

Helical transmembrane passes span 11-31 (LRVA…GTAI), 69-89 (SVWF…CSWR), and 159-179 (VGPL…VWGV).

This sequence belongs to the Ccs1/CcsB family. May interact with CcsA.

It is found in the cellular thylakoid membrane. In terms of biological role, required during biogenesis of c-type cytochromes (cytochrome c6 and cytochrome f) at the step of heme attachment. The sequence is that of Cytochrome c biogenesis protein CcsB from Synechococcus sp. (strain CC9902).